A 177-amino-acid chain; its full sequence is Ecotin (177 aa).

The first 23 residues, 1 to 23, serve as a signal peptide directing secretion; sequence MQASIQNRIFFGLVVLWSTTVLE. C83 and C122 are oxidised to a cystine.

This sequence belongs to the protease inhibitor I11 (ecotin) family. As to quaternary structure, homodimer.

The protein resides in the periplasm. General inhibitor of family S1 serine proteases. The chain is Ecotin from Prochlorococcus marinus (strain MIT 9313).